We begin with the raw amino-acid sequence, 569 residues long: MATPSLISETEAWKDLKAHLEGIKRTHLRELMGDTERCQSMMVEFDNIFLDYSRQQASPDTINKLFKLADAAHLKRKIDRMYNGDHINSTENRSVLHVALRAPRNSAICSDGKNVVPDVWSVLDKIKDFSERVRNGSWVGATGKELKDVIAVGIGGSFLGPLFVHTALQTDPEASKNAIGRELRFLANVDPIDAAKNISGLNPETTLVVVVSKTFTTAETMLNARTLREWISSALGASAVAKHMVAVSTNLPLVEKFGIDPNNAFAFWDWVGGRYSVCSAVGVLPLSLQYGFAVVEKFLQGAHSIDQHFSSAPFEKNIPVLLGLLSVWNVSFLGYPARAILPYSQALEKLAPHIQQVSMESNGKGVSVDGLPLPFESGEIDFGEPGTNGQHSFYQLIHQGRVIPCDFIGVVKSQQPVYLKGEVVNNHDELMSNFFAQPDALAYGKTPEQLKKENVSEHLIPHKTFNGNRPSLSILLPTLDAYRIGQLLAVYEHRVAVQGFVWGINSFDQWGVELGKSLATQVRKQLHASRVKGEAVEEGFNFSTKTLLTRYLEASSDVPADPSTLLPKI.

E360 serves as the catalytic Proton donor. Residues H391 and K516 contribute to the active site.

This sequence belongs to the GPI family. Homodimer.

It is found in the cytoplasm. It catalyses the reaction alpha-D-glucose 6-phosphate = beta-D-fructose 6-phosphate. The protein operates within carbohydrate degradation; glycolysis; D-glyceraldehyde 3-phosphate and glycerone phosphate from D-glucose: step 2/4. The sequence is that of Glucose-6-phosphate isomerase, cytosolic 2 (PGIC2) from Clarkia concinna (Red ribbons).